A 353-amino-acid chain; its full sequence is Photosystem II protein D1 (353 aa).

Thr2 is modified (N-acetylthreonine). Phosphothreonine is present on Thr2. 3 consecutive transmembrane segments (helical) span residues 29–46 (YIGW…TATS), 118–133 (HFLL…EWEL), and 142–156 (WIAV…AATA). A chlorophyll a-binding site is contributed by His118. Tyr126 is a binding site for pheophytin a. The [CaMn4O5] cluster site is built by Asp170 and Glu189. A helical transmembrane segment spans residues 197–218 (FHMLGVAGVFGGSLFSAMHGSL). A chlorophyll a-binding site is contributed by His198. A quinone contacts are provided by residues His215 and 264-265 (SF). His215 is a binding site for Fe cation. His272 contributes to the Fe cation binding site. The chain crosses the membrane as a helical span at residues 274–288 (FLAAWPVVGIWFTAL). The [CaMn4O5] cluster site is built by His332, Glu333, Asp342, and Ala344. The propeptide occupies 345-353 (VVEAPSTNG).

The protein belongs to the reaction center PufL/M/PsbA/D family. PSII is composed of 1 copy each of membrane proteins PsbA, PsbB, PsbC, PsbD, PsbE, PsbF, PsbH, PsbI, PsbJ, PsbK, PsbL, PsbM, PsbT, PsbX, PsbY, PsbZ, Psb30/Ycf12, at least 3 peripheral proteins of the oxygen-evolving complex and a large number of cofactors. It forms dimeric complexes. The D1/D2 heterodimer binds P680, chlorophylls that are the primary electron donor of PSII, and subsequent electron acceptors. It shares a non-heme iron and each subunit binds pheophytin, quinone, additional chlorophylls, carotenoids and lipids. D1 provides most of the ligands for the Mn4-Ca-O5 cluster of the oxygen-evolving complex (OEC). There is also a Cl(-1) ion associated with D1 and D2, which is required for oxygen evolution. The PSII complex binds additional chlorophylls, carotenoids and specific lipids. is required as a cofactor. Tyr-161 forms a radical intermediate that is referred to as redox-active TyrZ, YZ or Y-Z. In terms of processing, C-terminally processed by CTPA; processing is essential to allow assembly of the oxygen-evolving complex and thus photosynthetic growth.

Its subcellular location is the plastid. The protein resides in the chloroplast thylakoid membrane. It catalyses the reaction 2 a plastoquinone + 4 hnu + 2 H2O = 2 a plastoquinol + O2. Functionally, photosystem II (PSII) is a light-driven water:plastoquinone oxidoreductase that uses light energy to abstract electrons from H(2)O, generating O(2) and a proton gradient subsequently used for ATP formation. It consists of a core antenna complex that captures photons, and an electron transfer chain that converts photonic excitation into a charge separation. The D1/D2 (PsbA/PsbD) reaction center heterodimer binds P680, the primary electron donor of PSII as well as several subsequent electron acceptors. The polypeptide is Photosystem II protein D1 (Aethionema grandiflorum (Persian stone-cress)).